An 83-amino-acid polypeptide reads, in one-letter code: U20-theraphotoxin-Cg1a 2 (83 aa).

An N-terminal signal peptide occupies residues methionine 1 to alanine 21. A propeptide spanning residues alanine 22–arginine 47 is cleaved from the precursor. Disulfide bonds link cysteine 49-cysteine 63, cysteine 56-cysteine 68, and cysteine 62-cysteine 76.

It belongs to the neurotoxin 10 (Hwtx-1) family. 40 (Jztx-35) subfamily. In terms of tissue distribution, expressed by the venom gland.

The protein localises to the secreted. In terms of biological role, probable ion channel inhibitor. This Chilobrachys guangxiensis (Chinese earth tiger tarantula) protein is U20-theraphotoxin-Cg1a 2.